Here is a 21-residue protein sequence, read N- to C-terminus: MVKTPITEAIAAADTQGRFLS.

It belongs to the phycobiliprotein family. As to quaternary structure, heterodimer of an alpha and a beta subunit, which further assembles into trimers and the trimers into hexamers. Post-translationally, contains one covalently linked bilin chromophore.

It is found in the cellular thylakoid membrane. Light-harvesting photosynthetic bile pigment-protein from the phycobiliprotein complex (phycobilisome, PBS). Phycocyanin is the major phycobiliprotein in the PBS rod. This chain is C-phycocyanin alpha subunit, found in Anabaena sp. (strain L31).